Consider the following 829-residue polypeptide: Periplasmic nitrate reductase (829 aa).

The tat-type signal signal peptide spans 1–30; sequence MKLSRRDFMKANAVAAAAAVAGVSAPTLAA. The 57-residue stretch at 41–97 folds into the 4Fe-4S Mo/W bis-MGD-type domain; the sequence is ITWDKAPCRFCGTGCSVLVGSQDGRVVATQGDPDAPVNRGLNCIKGYFLSKIMYGQD. 4 residues coordinate [4Fe-4S] cluster: Cys-48, Cys-51, Cys-55, and Cys-83. Residues Lys-85, Gln-152, Asn-177, Cys-181, 214–221, 245–249, 264–266, Met-374, Gln-378, Asn-484, 510–511, Lys-533, Asp-560, and 719–728 contribute to the Mo-bis(molybdopterin guanine dinucleotide) site; these read WGSNMAEM, STFEH, QTD, SD, and TGRVLEHWHT. Phe-795 is a substrate binding site. The Mo-bis(molybdopterin guanine dinucleotide) site is built by Asn-803 and Lys-820.

It belongs to the prokaryotic molybdopterin-containing oxidoreductase family. NasA/NapA/NarB subfamily. As to quaternary structure, component of the periplasmic nitrate reductase NapAB complex composed of NapA and NapB. It depends on [4Fe-4S] cluster as a cofactor. Mo-bis(molybdopterin guanine dinucleotide) serves as cofactor. Post-translationally, predicted to be exported by the Tat system. The position of the signal peptide cleavage has not been experimentally proven.

The protein localises to the periplasm. It catalyses the reaction 2 Fe(II)-[cytochrome] + nitrate + 2 H(+) = 2 Fe(III)-[cytochrome] + nitrite + H2O. In terms of biological role, catalytic subunit of the periplasmic nitrate reductase complex NapAB. Receives electrons from NapB and catalyzes the reduction of nitrate to nitrite. The protein is Periplasmic nitrate reductase of Aeromonas hydrophila subsp. hydrophila (strain ATCC 7966 / DSM 30187 / BCRC 13018 / CCUG 14551 / JCM 1027 / KCTC 2358 / NCIMB 9240 / NCTC 8049).